The chain runs to 527 residues: Inorganic phosphate transporter 1-1 (527 aa).

Topologically, residues 1-21 are cytoplasmic; the sequence is MAGGQLNVLSTLDQAKTQWYH. A helical membrane pass occupies residues 22 to 42; sequence FMAIVIAGMGFFTDAYDLFCI. At 43-70 the chain is on the extracellular side; that stretch reads SLVTKLLGRIYYTDDSKDTPGALPPNVS. A helical membrane pass occupies residues 71-91; sequence AAVTGVALCGTLAGQLFFGWL. Over 92 to 99 the chain is Cytoplasmic; sequence GDKLGRKS. A helical transmembrane segment spans residues 100 to 120; that stretch reads VYGFTLILMVVCSVASGLSFG. Residues 121–124 lie on the Extracellular side of the membrane; it reads SSAK. Residues 125 to 145 form a helical membrane-spanning segment; it reads GVVSTLCFFRFWLGFGIGGDY. The Cytoplasmic segment spans residues 146-163; sequence PLSATIMSEYANKRTRGA. The helical transmembrane segment at 164–184 threads the bilayer; the sequence is FIAAVFAMQGFGILFGAIVAL. Residues 185–211 are Extracellular-facing; sequence AVSAGFRHAYPAPSYSDNHAASLVPQA. A helical membrane pass occupies residues 212–232; the sequence is DYVWRIILMFGTVPAALTYYW. The Cytoplasmic segment spans residues 233 to 292; the sequence is RMKMPETARYTALIARNAKQAAADMSKVLHTQIEESADRAETVAVGGESWGLFSRQFLRR. Residues 293–313 form a helical membrane-spanning segment; sequence HGLHLLATTSTWFLLDIAFYS. At 314 to 348 the chain is on the extracellular side; the sequence is QNLFQKDIFSKVGWIPPAKTMNALEELYRIARAQA. Residues 349–369 traverse the membrane as a helical segment; the sequence is LIALCGTIPGYWFTVAFIEIM. The Cytoplasmic segment spans residues 370-371; the sequence is GR. A helical transmembrane segment spans residues 372–392; the sequence is FWIQIMGFAMMTAFMLGLAIP. Topologically, residues 393 to 405 are extracellular; that stretch reads YHHWTTPGHHTGF. Residues 406–426 traverse the membrane as a helical segment; it reads IVMYGFTFFFANFGPNSTTFI. The Cytoplasmic segment spans residues 427-442; it reads VPAEIYPARLRSTCHG. Residues 443 to 463 form a helical membrane-spanning segment; it reads ISAAAGKAGAIIGAFGFLYAA. The Extracellular portion of the chain corresponds to 464 to 481; sequence QDQHKPEPGYPRGIGIKN. A helical transmembrane segment spans residues 482 to 502; the sequence is ALFVLAGTNFLGTIMTLLVPE. Residues 503–527 lie on the Cytoplasmic side of the membrane; that stretch reads SKGMSLEVISQEVADGDDEEAAYPK.

It belongs to the major facilitator superfamily. Phosphate:H(+) symporter (TC 2.A.1.9) family. As to expression, expressed in roots, stems and leaves.

The protein localises to the membrane. Its function is as follows. High-affinity transporter for external inorganic phosphate. Required for phosphate acquisition in plant. The protein is Inorganic phosphate transporter 1-1 (PHT1-1) of Oryza sativa subsp. japonica (Rice).